The sequence spans 625 residues: Vitamin B12 transporter BtuB (625 aa).

The signal sequence occupies residues 1–21 (MTIKKYTLLTALSVTAFSGWA). Positions 31-38 (DEMVVTAN) match the TonB box motif. The TBDR plug domain maps to 43–157 (PKSSVLAPVD…IGGVINILTG (115 aa)). Residues S90, N97, and 115-116 (IT) contribute to the cyanocob(III)alamin site. Residues 160 to 625 (KPGTTLSAGL…EYYFTGSYNF (466 aa)) enclose the TBDR beta-barrel domain. Transmembrane regions (beta stranded) follow at residues 163–170 (TTLSAGLG), 174–183 (YQTYDGSTQQ), and 189–200 (TTVTLAGNYTYS). Residues D204, Q217, D219, and D221 each contribute to the Ca(2+) site. 2 beta stranded membrane-spanning segments follow: residues 223 to 233 (FMGKMLWAGLE) and 238 to 254 (EQFN…NRSD). Residues Y255, D256, and D269 each contribute to the Ca(2+) site. Transmembrane regions (beta stranded) follow at residues 271-285 (RKLS…LRYK), 287-304 (GIYA…KDYN), 317-333 (SLDE…NTFQ), 336-345 (NGMISAGADW), 363-379 (FTQH…QQIS), 381-391 (VTLEGAVRSDD), 395-410 (FGWH…WEFI), 413-427 (YRLI…KAPN), 445-454 (ESKQWEGGVE), 460-469 (LTWRLSAYRN), 484-501 (YFNI…TGSF), 505-520 (PLSH…PRNA), 528-540 (RRAK…QLDW), and 546-561 (DWSV…YDKD). S317 provides a ligand contact to cyanocob(III)alamin. R528 is a cyanocob(III)alamin binding site. Y562 contacts cyanocob(III)alamin. The next 3 membrane-spanning stretches (beta stranded) occupy residues 569-583 (TVEL…LAVS), 596-607 (IANLFDKDYEMV), and 613-625 (PGRE…SYNF). A TonB C-terminal box motif is present at residues 608–625 (YGYQTPGREYYFTGSYNF).

The protein belongs to the TonB-dependent receptor family. BtuB (TC 1.B.14.3.1) subfamily.

The protein resides in the cell outer membrane. Functionally, involved in the active translocation of vitamin B12 (cyanocobalamin) across the outer membrane to the periplasmic space. It derives its energy for transport by interacting with the trans-periplasmic membrane protein TonB. The polypeptide is Vitamin B12 transporter BtuB (Yersinia pestis bv. Antiqua (strain Antiqua)).